The following is a 142-amino-acid chain: HTH-type transcriptional regulator MntR (142 aa).

One can recognise an HTH dtxR-type domain in the interval M1–T63. The Mn(2+) site is built by D8, E11, H77, E99, E102, and H103.

The protein belongs to the DtxR/MntR family. As to quaternary structure, homodimer.

Its subcellular location is the cytoplasm. With respect to regulation, DNA binding is strongly activated by Mn(2+). Functionally, central regulator of manganese homeostasis. The sequence is that of HTH-type transcriptional regulator MntR from Bacillus cereus (strain B4264).